Here is a 198-residue protein sequence, read N- to C-terminus: tRNA (cytidine(56)-2'-O)-methyltransferase (198 aa).

S-adenosyl-L-methionine is bound by residues leucine 81, 110 to 114, and 128 to 135; these read GAEKV and IGNQPHSE. The segment at 178-198 is disordered; it reads DAKQAEASGEGASRKNGQLPS.

It belongs to the aTrm56 family. Homodimer.

Its subcellular location is the cytoplasm. The catalysed reaction is cytidine(56) in tRNA + S-adenosyl-L-methionine = 2'-O-methylcytidine(56) in tRNA + S-adenosyl-L-homocysteine + H(+). Functionally, specifically catalyzes the AdoMet-dependent 2'-O-ribose methylation of cytidine at position 56 in tRNAs. In Pyrococcus abyssi (strain GE5 / Orsay), this protein is tRNA (cytidine(56)-2'-O)-methyltransferase.